The sequence spans 251 residues: Uridylate kinase (251 aa).

19-22 provides a ligand contact to ATP; it reads KLSG. A UMP-binding site is contributed by glycine 61. ATP is bound by residues glycine 62 and arginine 66. UMP contacts are provided by residues aspartate 81 and 142 to 149; that span reads TGNPYFTT. Positions 169, 175, and 178 each coordinate ATP.

This sequence belongs to the UMP kinase family. As to quaternary structure, homohexamer.

It is found in the cytoplasm. It carries out the reaction UMP + ATP = UDP + ADP. It participates in pyrimidine metabolism; CTP biosynthesis via de novo pathway; UDP from UMP (UMPK route): step 1/1. Inhibited by UTP. In terms of biological role, catalyzes the reversible phosphorylation of UMP to UDP. In Anaeromyxobacter dehalogenans (strain 2CP-C), this protein is Uridylate kinase.